The sequence spans 288 residues: 4-hydroxy-tetrahydrodipicolinate synthase (288 aa).

Threonine 42 lines the pyruvate pocket. Tyrosine 129 functions as the Proton donor/acceptor in the catalytic mechanism. Lysine 157 (schiff-base intermediate with substrate) is an active-site residue. Position 198 (isoleucine 198) interacts with pyruvate.

Belongs to the DapA family. In terms of assembly, homotetramer; dimer of dimers.

It localises to the cytoplasm. The enzyme catalyses L-aspartate 4-semialdehyde + pyruvate = (2S,4S)-4-hydroxy-2,3,4,5-tetrahydrodipicolinate + H2O + H(+). Its pathway is amino-acid biosynthesis; L-lysine biosynthesis via DAP pathway; (S)-tetrahydrodipicolinate from L-aspartate: step 3/4. Its function is as follows. Catalyzes the condensation of (S)-aspartate-beta-semialdehyde [(S)-ASA] and pyruvate to 4-hydroxy-tetrahydrodipicolinate (HTPA). The sequence is that of 4-hydroxy-tetrahydrodipicolinate synthase from Chlamydia abortus (strain DSM 27085 / S26/3) (Chlamydophila abortus).